The following is a 158-amino-acid chain: Putative 8-oxo-dGTP diphosphatase YtkD (158 aa).

The Nudix hydrolase domain occupies aspartate 6–proline 145. Positions glycine 53 to glycine 74 match the Nudix box motif. Residues glutamate 68 and glutamate 72 each coordinate Mg(2+).

The protein belongs to the Nudix hydrolase family. Mg(2+) is required as a cofactor.

The enzyme catalyses 8-oxo-dGTP + H2O = 8-oxo-dGMP + diphosphate + H(+). Not induced by oxidative damage (following treatment with paraquat or hydrogen peroxide). Not induced by mitomycin C. Not induced by sigma-B general stress inducers such as sodium chloride, ethanol or heat. In terms of biological role, involved in the GO system responsible for removing an oxidatively damaged form of guanine (7,8-dihydro-8-oxoguanine, 8-oxo-dGTP) from DNA and the nucleotide pool. 8-oxo-dGTP is inserted opposite dA and dC residues of template DNA with almost equal efficiency thus leading to A.T to G.C transversions. Functions, in conjunction with MutT, to protect vegetatively growing cells from DNA-damaging agents such as H(2)O(2) or t-BHP (t-butylhydroperoxide). The 2 proteins do not however protect spores. According to PubMed:15576788, phosphohydrolase that catalyzes the hydrolysis of all common nucleoside triphosphates as well as of the mutagenic analog 8-oxo-dGTP. The high catalytic efficiency on dGTP is in contrast to results from PubMed:14761999. According to PubMed:14761999, catalyzes the hydrolysis of 8-oxo-dGTP with a specific activity 413 times higher than that exhibited against dGTP. Preferentially catalyzes the hydrolysis of 8-oxo-dGTP and 8-oxo-GTP. According to PubMed:15576788, hydrolyzes nucleoside triphosphates in a stepwise fashion through the diphosphate to the monophosphate, releasing two molecules of inorganic orthophosphate. This Bacillus subtilis (strain 168) protein is Putative 8-oxo-dGTP diphosphatase YtkD (ytkD).